Consider the following 333-residue polypeptide: MRVTVLVGGVGGAHFLLGVQQLLGLGQFGPQQCPDTLTTGHELTAVVNIGDDAWIHGLRVCPDLDTCMYTLGDGIDPQRGWGHRDETWHAKEELARYGVQPDWFELGDRDLATHLVRTQMLNAGYRLSQITTALCDRWQPGARLVPASDDRCETHVVITDPINDSRRAIHFQEWWVRYRAQVPTHSFAYVGAEKASAATEAVAAIADADVILVAPSNPVVSIGAILAIPGIRGALRTTTAPVVGYSPIIDGKPLRGMADKCLTVIGVQSTATAVGQHYGARRTTGILDCWLVHEDDHAEIEGVAVRSIPLLMSSPKTTADMVNIGLQLAGVSA.

Residue aspartate 65 coordinates 7,8-didemethyl-8-hydroxy-5-deazariboflavin.

This sequence belongs to the CofD family. In terms of assembly, homodimer. It depends on Mg(2+) as a cofactor.

It catalyses the reaction enolpyruvoyl-2-diphospho-5'-guanosine + 7,8-didemethyl-8-hydroxy-5-deazariboflavin = dehydro coenzyme F420-0 + GMP + H(+). The protein operates within cofactor biosynthesis; coenzyme F420 biosynthesis. Its function is as follows. Catalyzes the transfer of the phosphoenolpyruvate moiety from enoylpyruvoyl-2-diphospho-5'-guanosine (EPPG) to 7,8-didemethyl-8-hydroxy-5-deazariboflavin (FO) with the formation of dehydro coenzyme F420-0 and GMP. The sequence is that of Phosphoenolpyruvate transferase from Mycobacterium leprae (strain TN).